The following is a 939-amino-acid chain: AP-2 complex subunit alpha-2 (939 aa).

A 1,2-diacyl-sn-glycero-3-phospho-(1D-myo-inositol-3,4,5-trisphosphate) is bound by residues 11 to 12, Lys-43, Tyr-53, and 57 to 61; these read RG and KYVCK. The disordered stretch occupies residues 612-681; the sequence is LAKLKKKKGP…AGPPPSSGGS (70 aa). Residues 646–667 are compositionally biased toward low complexity; that stretch reads PASTSAVSTPSPSADLLGLGAA. Residues 668–677 are compositionally biased toward pro residues; that stretch reads PPAPAGPPPS.

It belongs to the adaptor complexes large subunit family. As to quaternary structure, adaptor protein complex 2 (AP-2) is a heterotetramer composed of two large adaptins (alpha-type subunit AP2A1 or AP2A2 and beta-type subunit AP2B1), a medium adaptin (mu-type subunit AP2M1) and a small adaptin (sigma-type subunit AP2S1). Binds EPN1, EPS15, AMPH, SNAP91 and BIN1. Interacts with HIP1. Interacts with DGKD. Interacts with DENND1A, DENND1B and DENND1C. Interacts with FCHO1 and DAB2. Interacts with ATAT1; this interaction is required for efficient alpha-tubulin acetylation by ATAT1. Interacts with KIAA1107. Together with AP2B1 and AP2M1, it interacts with ADAM10; this interaction facilitates ADAM10 endocytosis from the plasma membrane during long-term potentiation in hippocampal neurons. Interacts with CLN3 (via dileucine motif). Interacts with ABCB11; this interaction regulates cell membrane expression of ABCB11 through its internalization in a clathrin-dependent manner and its subsequent degradation. Interacts with Cacfd1. Interacts with DNAJC6. As to expression, expressed in the brain (at protein level).

The protein resides in the cell membrane. The protein localises to the membrane. Its subcellular location is the coated pit. Component of the adaptor protein complex 2 (AP-2). Adaptor protein complexes function in protein transport via transport vesicles in different membrane traffic pathways. Adaptor protein complexes are vesicle coat components and appear to be involved in cargo selection and vesicle formation. AP-2 is involved in clathrin-dependent endocytosis in which cargo proteins are incorporated into vesicles surrounded by clathrin (clathrin-coated vesicles, CCVs) which are destined for fusion with the early endosome. The clathrin lattice serves as a mechanical scaffold but is itself unable to bind directly to membrane components. Clathrin-associated adaptor protein (AP) complexes which can bind directly to both the clathrin lattice and to the lipid and protein components of membranes are considered to be the major clathrin adaptors contributing the CCV formation. AP-2 also serves as a cargo receptor to selectively sort the membrane proteins involved in receptor-mediated endocytosis. AP-2 seems to play a role in the recycling of synaptic vesicle membranes from the presynaptic surface. AP-2 recognizes Y-X-X-[FILMV] (Y-X-X-Phi) and [ED]-X-X-X-L-[LI] endocytosis signal motifs within the cytosolic tails of transmembrane cargo molecules. AP-2 may also play a role in maintaining normal post-endocytic trafficking through the ARF6-regulated, non-clathrin pathway. During long-term potentiation in hippocampal neurons, AP-2 is responsible for the endocytosis of ADAM10. The AP-2 alpha subunit binds polyphosphoinositide-containing lipids, positioning AP-2 on the membrane. The AP-2 alpha subunit acts via its C-terminal appendage domain as a scaffolding platform for endocytic accessory proteins. The AP-2 alpha and AP-2 sigma subunits are thought to contribute to the recognition of the [ED]-X-X-X-L-[LI] motif. This Homo sapiens (Human) protein is AP-2 complex subunit alpha-2 (AP2A2).